The primary structure comprises 391 residues: Metal tolerance protein 7 (391 aa).

Residues 1-21 (MGSRGRRGGGERETETEEDET) form a disordered region. Over 1–103 (MGSRGRRGGG…LRQMAKGERL (103 aa)) the chain is Cytoplasmic. The helical transmembrane segment at 104-124 (AINLSNIINLILFIGKVLASV) threads the bilayer. The Vacuolar segment spans residues 125–134 (ESLSMAVIAS). The chain crosses the membrane as a helical span at residues 135–155 (TLDSLLDLLSGFILWFTAHAM). The Cytoplasmic segment spans residues 156-171 (KKPNKYSYPIGKRRMQ). A helical transmembrane segment spans residues 172–192 (PVGIIVFASVMGTLGFQVLIE). Topologically, residues 193-210 (SGRQLITNEHQVFDHRKE) are vacuolar. Residues 211–231 (LWMIGSMSSVAVVKFFLMLYC) form a helical membrane-spanning segment. At 232 to 246 (RSFKNEIVRAYAQDH) the chain is on the cytoplasmic side. A helical transmembrane segment spans residues 247-264 (FFDVITNSVGLVSALLAV). Residues 265-266 (RY) lie on the Vacuolar side of the membrane. A helical transmembrane segment spans residues 267 to 287 (KWWMDPVGAILIAVYTITTWA). Over 288–391 (RTVVENVGTL…THRPEHKAEV (104 aa)) the chain is Cytoplasmic.

Belongs to the cation diffusion facilitator (CDF) transporter (TC 2.A.4) family. SLC30A subfamily.

It localises to the vacuole membrane. Its function is as follows. Involved in sequestration of excess metal in the cytoplasm into vacuoles to maintain metal homeostasis. This chain is Metal tolerance protein 7 (MTP7), found in Oryza sativa subsp. japonica (Rice).